Consider the following 436-residue polypeptide: Trigger factor (436 aa).

One can recognise a PPIase FKBP-type domain in the interval 161–246; it reads DDRVTVDFVG…VNKVEGLSLP (86 aa).

This sequence belongs to the FKBP-type PPIase family. Tig subfamily.

It is found in the cytoplasm. It carries out the reaction [protein]-peptidylproline (omega=180) = [protein]-peptidylproline (omega=0). Involved in protein export. Acts as a chaperone by maintaining the newly synthesized protein in an open conformation. Functions as a peptidyl-prolyl cis-trans isomerase. The polypeptide is Trigger factor (Pseudoalteromonas atlantica (strain T6c / ATCC BAA-1087)).